A 1098-amino-acid polypeptide reads, in one-letter code: Bifunctional helicase and thymine dioxygenase JBP2 (1098 aa).

Residues 1-540 (MLNGLTRVST…PPLFVPTRLA (540 aa)) are thymine dioxygenase. Fe cation is bound by residues H415, D417, and H465. R479 lines the 2-oxoglutarate pocket. The DNA Helicase stretch occupies residues 541 to 1098 (SHLAPVQLAA…RYQESVRESE (558 aa)). The Helicase ATP-binding domain occupies 555-730 (VERTEKQSGC…YRLVGWVNKG (176 aa)). 568 to 575 (MTMGLGKT) serves as a coordination point for ATP. The DEAH box signature appears at 681–684 (DEGH). One can recognise a Helicase C-terminal domain in the interval 897–1057 (VLVDIVLRVQ…ALPDELEDCA (161 aa)).

The protein in the C-terminal section; belongs to the SNF2/RAD54 helicase family. It in the N-terminal section; belongs to the TET family. JBP2 subfamily. Requires Fe(2+) as cofactor.

The protein localises to the nucleus. The catalysed reaction is ATP + H2O = ADP + phosphate + H(+). It carries out the reaction thymine + 2-oxoglutarate + O2 = 5-hydroxymethyluracil + succinate + CO2. Its function is as follows. Dioxygenase that catalyzes the first step of DNA base J (beta-d-glucosyl-HOMedU) biosynthesis by converting thymine to 5-hydroxymethyluracil (HOMedU). DNA base J is a hypermodified thymidine residue found in the genome of kinetoplastid parasites, which is localized primarily to repetitive DNA, namely the telomeres, and is implicated in the regulation of antigenic variation. Probably also acts as a DNA helicase. Recognizes and binds specific regions of the genome, hydrolyzes ATP and allows the DNA base J de novo synthesis. Involved in initial synthesis of DNA base J, JBP1 being able to act via the basal level of DNA base J and propagate further synthesis. In contrast to JBP1, it does not specifically bind DNA base J, however it binds chromatin. The protein is Bifunctional helicase and thymine dioxygenase JBP2 (JBP2) of Leishmania tarentolae (Sauroleishmania tarentolae).